The following is a 359-amino-acid chain: Protein-glutamate methylesterase/protein-glutamine glutaminase 1 (359 aa).

Residues 4-121 (SVLIVDDSAV…RAFLLEAAKE (118 aa)) enclose the Response regulatory domain. Asp55 carries the 4-aspartylphosphate modification. One can recognise a CheB-type methylesterase domain in the interval 169-354 (YRTTEKIIAI…MSLERIAHML (186 aa)). Active-site residues include Ser181, His207, and Asp303.

Belongs to the CheB family. Phosphorylated by CheA. Phosphorylation of the N-terminal regulatory domain activates the methylesterase activity.

It is found in the cytoplasm. The catalysed reaction is [protein]-L-glutamate 5-O-methyl ester + H2O = L-glutamyl-[protein] + methanol + H(+). It carries out the reaction L-glutaminyl-[protein] + H2O = L-glutamyl-[protein] + NH4(+). Its function is as follows. Involved in chemotaxis. Part of a chemotaxis signal transduction system that modulates chemotaxis in response to various stimuli. Catalyzes the demethylation of specific methylglutamate residues introduced into the chemoreceptors (methyl-accepting chemotaxis proteins or MCP) by CheR. Also mediates the irreversible deamidation of specific glutamine residues to glutamic acid. The sequence is that of Protein-glutamate methylesterase/protein-glutamine glutaminase 1 from Chromobacterium violaceum (strain ATCC 12472 / DSM 30191 / JCM 1249 / CCUG 213 / NBRC 12614 / NCIMB 9131 / NCTC 9757 / MK).